We begin with the raw amino-acid sequence, 803 residues long: Zinc finger and BTB domain-containing protein 17 (803 aa).

Positions 1–104 (MDFPQHSQHV…VATFLQMQDI (104 aa)) constitute a BTB domain. Residues 116–295 (EPATSPGGNA…GLRSGTYGDR (180 aa)) are disordered. Residue Ser-120 is modified to Phosphoserine. The segment covering 132–142 (GGDKRAKEEKV) has biased composition (basic and acidic residues). 2 stretches are compositionally biased toward low complexity: residues 171-180 (GQAQSAASGA) and 206-217 (AAAEAEAALSES). 2 stretches are compositionally biased toward acidic residues: residues 233–244 (EQKEQEEQEEEG) and 261–272 (EAPEENENEESA). The interval 269–308 (EESAGTDSGQELGSEARGLRSGTYGDRTESKAYGSVIHKC) is interaction with MYC. C2H2-type zinc fingers lie at residues 306–328 (HKCE…IRIH), 334–356 (FSCR…EKTH), 362–384 (YGCE…KKRH), 390–412 (YRCE…QLVH), 418–440 (YQCD…LETH), 446–468 (HKCP…LKIH), 474–496 (LKCR…LRIH), 502–524 (YVCI…VRIH), 530–552 (CQCV…VRQH), 558–580 (YVCE…IRHH), 586–608 (HKCS…IIIH), 614–637 (YLCD…KTVH), and 717–739 (YACD…VRIH). Lys-397 is covalently cross-linked (Glycyl lysine isopeptide (Lys-Gly) (interchain with G-Cter in ubiquitin)). Lys-481 participates in a covalent cross-link: Glycyl lysine isopeptide (Lys-Gly) (interchain with G-Cter in ubiquitin). Residues 637–718 (HQGKAGIKIL…EDPNTHILYA (82 aa)) form an interaction with MYC region. Residues 637–803 (HQGKAGIKIL…TAPECPPPAE (167 aa)) form an interaction with HCFC1 region. Residues 779-803 (RDGAEGQPALAETSPTAPECPPPAE) are disordered.

It belongs to the krueppel C2H2-type zinc-finger protein family. As to quaternary structure, homooligomerizes (via the BTB/POZ domain), multimerization is required for DNA binding. Interacts (via the C-terminal zinc fingers) with GIF1; the interaction results in the recruitment of MYB to the CDKN1A/p21 and CDKN1B promoters and repression of transcription. Interacts with TRAF2, interfering with the binding of UBC13 to TRAF2, and inhibiting TRAF2 E3 ligase activity. Interacts with MYC (via the C-terminal helix-loop-helix motif); the interaction inhibits ZBTB17 transactivation and growth arrest activities and renders it insoluble in the nucleus. Also interacts with HCFC1, MAGEA4 and TMPRSS11A. Interacts with BCL6; the interaction inhibits ZBTB17 transactivation activity on target genes involved in cell cycle arrest. Interacts with ZBTB49 isoform 3/ZNF509S1; this interaction blocks ZBTB17-mediated repression of RB1. Undergoes 'Lys-48'-linked polyubiquitination at Lys-397 and Lys-481 and subsequent proteasomal degradation in a TRAF2-dependent manner. In terms of tissue distribution, expressed in germinal center B-cells.

The protein resides in the nucleus. Functionally, transcription factor that can function as an activator or repressor depending on its binding partners, and by targeting negative regulators of cell cycle progression. Plays a critical role in early lymphocyte development, where it is essential to prevent apoptosis in lymphoid precursors, allowing them to survive in response to IL7 and undergo proper lineage commitment. Has been shown to bind to the promoters of adenovirus major late protein and cyclin D1 and activate transcription. Required for early embryonic development during gastrulation. Represses RB1 transcription; this repression can be blocked by interaction with ZBTB49 isoform 3/ZNF509S1. The protein is Zinc finger and BTB domain-containing protein 17 (ZBTB17) of Homo sapiens (Human).